The sequence spans 289 residues: Bis(5'-nucleosyl)-tetraphosphatase, symmetrical (289 aa).

Belongs to the Ap4A hydrolase family.

It carries out the reaction P(1),P(4)-bis(5'-adenosyl) tetraphosphate + H2O = 2 ADP + 2 H(+). In terms of biological role, hydrolyzes diadenosine 5',5'''-P1,P4-tetraphosphate to yield ADP. This is Bis(5'-nucleosyl)-tetraphosphatase, symmetrical from Yersinia pseudotuberculosis serotype O:3 (strain YPIII).